The chain runs to 152 residues: Acidic phospholipase A2 1 (152 aa).

A signal peptide spans 1–19 (MNPAYFLVLAAVCVSLLGA). The propeptide occupies 20–27 (ANIPPQPL). Disulfide bonds link Cys-38-Cys-104, Cys-54-Cys-151, Cys-56-Cys-72, Cys-71-Cys-132, Cys-78-Cys-125, Cys-88-Cys-118, and Cys-111-Cys-123. Tyr-55, Gly-57, and Gly-59 together coordinate Ca(2+). His-75 is an active-site residue. Ca(2+) is bound at residue Asp-76. Residue Asp-126 is part of the active site.

This sequence belongs to the phospholipase A2 family. Group I subfamily. D49 sub-subfamily. Ca(2+) is required as a cofactor. Expressed by the venom gland.

Its subcellular location is the secreted. The enzyme catalyses a 1,2-diacyl-sn-glycero-3-phosphocholine + H2O = a 1-acyl-sn-glycero-3-phosphocholine + a fatty acid + H(+). Its function is as follows. PLA2 catalyzes the calcium-dependent hydrolysis of the 2-acyl groups in 3-sn-phosphoglycerides. This chain is Acidic phospholipase A2 1, found in Bungarus candidus (Malayan krait).